The chain runs to 165 residues: Lipoprotein signal peptidase (165 aa).

Transmembrane regions (helical) follow at residues 12 to 32, 70 to 90, and 102 to 122; these read WLWLVVVVLIVDLGSKALILQ, WFFAGIAIGICVLLVVMMYRA, and ALIIGGALGNLFDRLWHGFVV. Residues Asp123 and Asp141 contribute to the active site. A helical transmembrane segment spans residues 137–157; the sequence is FNLADTAICIGAALVVLEGFL.

Belongs to the peptidase A8 family.

Its subcellular location is the cell inner membrane. The catalysed reaction is Release of signal peptides from bacterial membrane prolipoproteins. Hydrolyzes -Xaa-Yaa-Zaa-|-(S,diacylglyceryl)Cys-, in which Xaa is hydrophobic (preferably Leu), and Yaa (Ala or Ser) and Zaa (Gly or Ala) have small, neutral side chains.. It participates in protein modification; lipoprotein biosynthesis (signal peptide cleavage). In terms of biological role, this protein specifically catalyzes the removal of signal peptides from prolipoproteins. This chain is Lipoprotein signal peptidase, found in Cronobacter sakazakii (strain ATCC BAA-894) (Enterobacter sakazakii).